Consider the following 135-residue polypeptide: NADPH-dependent 7-cyano-7-deazaguanine reductase (135 aa).

Cys-48 acts as the Thioimide intermediate in catalysis. Catalysis depends on Asp-55, which acts as the Proton donor. Residues 70–72 (IEL) and 89–90 (HE) each bind substrate.

Belongs to the GTP cyclohydrolase I family. QueF type 1 subfamily.

It is found in the cytoplasm. It carries out the reaction 7-aminomethyl-7-carbaguanine + 2 NADP(+) = 7-cyano-7-deazaguanine + 2 NADPH + 3 H(+). The protein operates within tRNA modification; tRNA-queuosine biosynthesis. Catalyzes the NADPH-dependent reduction of 7-cyano-7-deazaguanine (preQ0) to 7-aminomethyl-7-deazaguanine (preQ1). In Prochlorococcus marinus (strain MIT 9303), this protein is NADPH-dependent 7-cyano-7-deazaguanine reductase.